The chain runs to 188 residues: Protein GrpE (188 aa).

Positions Met-1 to Ala-22 are enriched in low complexity. A disordered region spans residues Met-1–Glu-26.

The protein belongs to the GrpE family. Homodimer.

The protein localises to the cytoplasm. Participates actively in the response to hyperosmotic and heat shock by preventing the aggregation of stress-denatured proteins, in association with DnaK and GrpE. It is the nucleotide exchange factor for DnaK and may function as a thermosensor. Unfolded proteins bind initially to DnaJ; upon interaction with the DnaJ-bound protein, DnaK hydrolyzes its bound ATP, resulting in the formation of a stable complex. GrpE releases ADP from DnaK; ATP binding to DnaK triggers the release of the substrate protein, thus completing the reaction cycle. Several rounds of ATP-dependent interactions between DnaJ, DnaK and GrpE are required for fully efficient folding. This is Protein GrpE from Exiguobacterium sibiricum (strain DSM 17290 / CCUG 55495 / CIP 109462 / JCM 13490 / 255-15).